The sequence spans 711 residues: Double-stranded RNA-specific editase 1 (711 aa).

Positions 1–79 (MDIEDEENMS…RRKTPGPVLP (79 aa)) are disordered. The span at 63–73 (SKYRLKKRRKT) shows a compositional bias: basic residues. The DRBM 1 domain maps to 78 to 144 (LPKNALMQLN…AEKALRSFVQ (67 aa)). Interaction with substrate RNA stretches follow at residues 83–88 (LMQLNE) and 104–105 (VH). Residue Ser-149 is modified to Phosphoserine. Positions 176 to 220 (LFNGFETPDKSEPPFYVGSNGDDSFSSSGDVSLSASPVPASLTQP) are disordered. Residues 192-213 (VGSNGDDSFSSSGDVSLSASPV) are compositionally biased toward low complexity. The 68-residue stretch at 231–298 (PSGKNPVMIL…AQSALATVFN (68 aa)) folds into the DRBM 2 domain. 2 interaction with substrate RNA regions span residues 237 to 242 (VMILNE) and His-259. Residues 370 to 707 (SVSTGTKCIN…VEKPTEQDQF (338 aa)) enclose the A to I editase domain. His-394 contributes to the Zn(2+) binding site. The active-site Proton donor is the Glu-396. The 1D-myo-inositol hexakisphosphate site is built by Arg-400 and Arg-401. The Zn(2+) site is built by Cys-451 and Cys-526. Positions 529, 532, 639, 672, 682, and 700 each coordinate 1D-myo-inositol hexakisphosphate.

As to quaternary structure, homodimer. Homodimerization is essential for its catalytic activity. Can form heterodimers with isoform 5 of ADAR/ADAR1. The cofactor is 1D-myo-inositol hexakisphosphate. As to expression, brain and peripheral tissues.

The protein resides in the nucleus. It localises to the nucleolus. The catalysed reaction is adenosine in double-stranded RNA + H2O + H(+) = inosine in double-stranded RNA + NH4(+). Functionally, catalyzes the hydrolytic deamination of adenosine to inosine in double-stranded RNA (dsRNA) referred to as A-to-I RNA editing. This may affect gene expression and function in a number of ways that include mRNA translation by changing codons and hence the amino acid sequence of proteins; pre-mRNA splicing by altering splice site recognition sequences; RNA stability by changing sequences involved in nuclease recognition; genetic stability in the case of RNA virus genomes by changing sequences during viral RNA replication; and RNA structure-dependent activities such as microRNA production or targeting or protein-RNA interactions. Can edit both viral and cellular RNAs and can edit RNAs at multiple sites (hyper-editing) or at specific sites (site-specific editing). Its cellular RNA substrates include: bladder cancer-associated protein (BLCAP), neurotransmitter receptors for glutamate (GRIA2 and GRIK2) and serotonin (HTR2C), GABA receptor (GABRA3) and potassium voltage-gated channel (KCNA1). Site-specific RNA editing of transcripts encoding these proteins results in amino acid substitutions which consequently alter their functional activities. Edits GRIA2 at both the Q/R and R/G sites efficiently but converts the adenosine in hotspot1 much less efficiently. Can inhibit cell proliferation and migration and can stimulate exocytosis. In Rattus norvegicus (Rat), this protein is Double-stranded RNA-specific editase 1 (Adarb1).